The following is a 365-amino-acid chain: uncharacterized protein (365 aa).

The Cytoplasmic portion of the chain corresponds to 1 to 133; it reads MVLAKQWVLK…RKLDKNKVGK (133 aa). Residues 134–154 traverse the membrane as a helical segment; sequence LWWYLSVLGGTSLTAYFIFFT. Residues 155–169 lie on the Extracellular side of the membrane; it reads YAQLQEREEDYGKVY. Residues 170–190 form a helical membrane-spanning segment; the sequence is LISGAAGAVGTVCIQLALNVF. Residues 191 to 365 lie on the Cytoplasmic side of the membrane; that stretch reads KASKVIAIAG…KLITKVNNEE (175 aa).

Its subcellular location is the membrane. This is an uncharacterized protein from Saccharomyces cerevisiae (strain ATCC 204508 / S288c) (Baker's yeast).